Consider the following 325-residue polypeptide: Elongation factor P--(R)-beta-lysine ligase (325 aa).

76-78 (SPE) is a substrate binding site. ATP contacts are provided by residues 100-102 (RNE) and asparagine 109. A substrate-binding site is contributed by tyrosine 118. An ATP-binding site is contributed by 244–245 (EL). Residue glutamate 251 coordinates substrate. An ATP-binding site is contributed by glycine 300.

It belongs to the class-II aminoacyl-tRNA synthetase family. EpmA subfamily. Homodimer.

The catalysed reaction is D-beta-lysine + L-lysyl-[protein] + ATP = N(6)-((3R)-3,6-diaminohexanoyl)-L-lysyl-[protein] + AMP + diphosphate + H(+). Functionally, with EpmB is involved in the beta-lysylation step of the post-translational modification of translation elongation factor P (EF-P) on 'Lys-34'. Catalyzes the ATP-dependent activation of (R)-beta-lysine produced by EpmB, forming a lysyl-adenylate, from which the beta-lysyl moiety is then transferred to the epsilon-amino group of EF-P 'Lys-34'. This chain is Elongation factor P--(R)-beta-lysine ligase, found in Salmonella paratyphi A (strain ATCC 9150 / SARB42).